The primary structure comprises 210 residues: Small ribosomal subunit protein uS5 (210 aa).

Polar residues predominate over residues M1–N11. The interval M1–E56 is disordered. Positions E18 to R29 are enriched in low complexity. Residues G32–E56 show a composition bias toward basic and acidic residues. Residues W54 to V117 enclose the S5 DRBM domain.

Belongs to the universal ribosomal protein uS5 family. Part of the 30S ribosomal subunit. Contacts proteins S4 and S8.

Its function is as follows. With S4 and S12 plays an important role in translational accuracy. Functionally, located at the back of the 30S subunit body where it stabilizes the conformation of the head with respect to the body. The sequence is that of Small ribosomal subunit protein uS5 from Prochlorococcus marinus (strain MIT 9303).